A 172-amino-acid polypeptide reads, in one-letter code: 3-hydroxydecanoyl-[acyl-carrier-protein] dehydratase (172 aa).

Residue His71 is part of the active site.

This sequence belongs to the thioester dehydratase family. FabA subfamily. As to quaternary structure, homodimer.

The protein resides in the cytoplasm. It catalyses the reaction a (3R)-hydroxyacyl-[ACP] = a (2E)-enoyl-[ACP] + H2O. It carries out the reaction (3R)-hydroxydecanoyl-[ACP] = (2E)-decenoyl-[ACP] + H2O. The enzyme catalyses (2E)-decenoyl-[ACP] = (3Z)-decenoyl-[ACP]. Its pathway is lipid metabolism; fatty acid biosynthesis. Functionally, necessary for the introduction of cis unsaturation into fatty acids. Catalyzes the dehydration of (3R)-3-hydroxydecanoyl-ACP to E-(2)-decenoyl-ACP and then its isomerization to Z-(3)-decenoyl-ACP. Can catalyze the dehydratase reaction for beta-hydroxyacyl-ACPs with saturated chain lengths up to 16:0, being most active on intermediate chain length. This Escherichia coli O127:H6 (strain E2348/69 / EPEC) protein is 3-hydroxydecanoyl-[acyl-carrier-protein] dehydratase.